A 247-amino-acid chain; its full sequence is MAGHSKWANTKHRKAAQDAKRGKIFTKIIRELVTAARLGGGDPGSNPRLRAAIDKALSNNMTRDTLNRAIARGVGGDEDANMETIIYEGYGPGGTAVMVECLSDNRNRTVSEVRHAFTKTGGNLGTDGSVSYLFTKKGVISYAPGLDEDAVMDAALEAGADDVVTYDDGAIDVFTPWETFGNVKDALDAAGLKAESAEVSMIPSTKADMDAETAPKLMRLIDMLEDCDDVQEVYHNGEISDEVAELL.

This sequence belongs to the TACO1 family.

The protein resides in the cytoplasm. This Pectobacterium carotovorum subsp. carotovorum (strain PC1) protein is Probable transcriptional regulatory protein PC1_1817.